The chain runs to 527 residues: Bifunctional purine biosynthesis protein PurH (527 aa).

In terms of domain architecture, MGS-like spans 8-156 (AGAKRPIRRA…KNHPSVAVVV (149 aa)).

It belongs to the PurH family.

The catalysed reaction is (6R)-10-formyltetrahydrofolate + 5-amino-1-(5-phospho-beta-D-ribosyl)imidazole-4-carboxamide = 5-formamido-1-(5-phospho-D-ribosyl)imidazole-4-carboxamide + (6S)-5,6,7,8-tetrahydrofolate. It carries out the reaction IMP + H2O = 5-formamido-1-(5-phospho-D-ribosyl)imidazole-4-carboxamide. The protein operates within purine metabolism; IMP biosynthesis via de novo pathway; 5-formamido-1-(5-phospho-D-ribosyl)imidazole-4-carboxamide from 5-amino-1-(5-phospho-D-ribosyl)imidazole-4-carboxamide (10-formyl THF route): step 1/1. It functions in the pathway purine metabolism; IMP biosynthesis via de novo pathway; IMP from 5-formamido-1-(5-phospho-D-ribosyl)imidazole-4-carboxamide: step 1/1. This Mycobacterium sp. (strain KMS) protein is Bifunctional purine biosynthesis protein PurH.